A 496-amino-acid polypeptide reads, in one-letter code: Membrane-bound lytic murein transglycosylase F (496 aa).

The signal sequence occupies residues methionine 1–cysteine 31. Positions aspartate 32 to valine 271 are non-LT domain. An LT domain region spans residues asparagine 273–arginine 496. The active site involves glutamate 316. The tract at residues histidine 464–valine 485 is disordered.

The protein in the N-terminal section; belongs to the bacterial solute-binding protein 3 family. This sequence in the C-terminal section; belongs to the transglycosylase Slt family.

The protein localises to the cell outer membrane. The enzyme catalyses Exolytic cleavage of the (1-&gt;4)-beta-glycosidic linkage between N-acetylmuramic acid (MurNAc) and N-acetylglucosamine (GlcNAc) residues in peptidoglycan, from either the reducing or the non-reducing ends of the peptidoglycan chains, with concomitant formation of a 1,6-anhydrobond in the MurNAc residue.. Its function is as follows. Murein-degrading enzyme that degrades murein glycan strands and insoluble, high-molecular weight murein sacculi, with the concomitant formation of a 1,6-anhydromuramoyl product. Lytic transglycosylases (LTs) play an integral role in the metabolism of the peptidoglycan (PG) sacculus. Their lytic action creates space within the PG sacculus to allow for its expansion as well as for the insertion of various structures such as secretion systems and flagella. The protein is Membrane-bound lytic murein transglycosylase F of Aeromonas salmonicida (strain A449).